Reading from the N-terminus, the 861-residue chain is Leucine--tRNA ligase (861 aa).

Positions 42–52 (PYPSGKLHMGH) match the 'HIGH' region motif. Residues 620–624 (KMSKS) carry the 'KMSKS' region motif. Residue lysine 623 participates in ATP binding.

It belongs to the class-I aminoacyl-tRNA synthetase family.

The protein localises to the cytoplasm. The catalysed reaction is tRNA(Leu) + L-leucine + ATP = L-leucyl-tRNA(Leu) + AMP + diphosphate. This chain is Leucine--tRNA ligase, found in Buchnera aphidicola subsp. Schizaphis graminum (strain Sg).